Consider the following 431-residue polypeptide: Serine--tRNA ligase (431 aa).

Position 235 to 237 (235 to 237 (TAE)) interacts with L-serine. Residues 266 to 268 (RRE) and V282 each bind ATP. E289 contributes to the L-serine binding site. ATP is bound at residue 353-356 (EASS). S389 contacts L-serine.

Belongs to the class-II aminoacyl-tRNA synthetase family. Type-1 seryl-tRNA synthetase subfamily. Homodimer. The tRNA molecule binds across the dimer.

The protein resides in the cytoplasm. The enzyme catalyses tRNA(Ser) + L-serine + ATP = L-seryl-tRNA(Ser) + AMP + diphosphate + H(+). It catalyses the reaction tRNA(Sec) + L-serine + ATP = L-seryl-tRNA(Sec) + AMP + diphosphate + H(+). It functions in the pathway aminoacyl-tRNA biosynthesis; selenocysteinyl-tRNA(Sec) biosynthesis; L-seryl-tRNA(Sec) from L-serine and tRNA(Sec): step 1/1. In terms of biological role, catalyzes the attachment of serine to tRNA(Ser). Is also able to aminoacylate tRNA(Sec) with serine, to form the misacylated tRNA L-seryl-tRNA(Sec), which will be further converted into selenocysteinyl-tRNA(Sec). The protein is Serine--tRNA ligase of Chlorobium phaeobacteroides (strain DSM 266 / SMG 266 / 2430).